Consider the following 450-residue polypeptide: MKVIDQFKNKKVLVLGLAKSGESAARLLDKLGAIVTVNDGKPFEDNPAAQCLLEEGIKVITGGHPLELLDEEFALMVKNPGIPYSNPMIEKALAKGIPVLTEVELAYLISEAPIIGITGSNGKTTTTTMIGEVLTAAGQHGLLSGNIGYPASQVAQIATDKNTLVMELSSFQLMGVQEFHPEIAVITNLMPTHIDYHGLFEEYVAAKWNIQNKMTAADFLVLNFNQDLVKDLASKTEATVVPFSTLEKVDGAYLEDGQLYFRGEVVMAANEIGVPGSHNVENALATIAVAKLRGVDNQTIKETLSAFGGVKHRLQFVDDIKGVKFYNDSKSTNILATQKALSGFDNSKVVLIAGGLDRGNEFDELVPDITGLKKMVILGQSAERVKRAADKAGVAYVEATDIADATRKAYELATQGDVVLLSPANASWDMYANFEVRGDLFIDTVAELKE.

Residue 119-125 (GSNGKTT) coordinates ATP.

The protein belongs to the MurCDEF family.

It localises to the cytoplasm. The enzyme catalyses UDP-N-acetyl-alpha-D-muramoyl-L-alanine + D-glutamate + ATP = UDP-N-acetyl-alpha-D-muramoyl-L-alanyl-D-glutamate + ADP + phosphate + H(+). Its pathway is cell wall biogenesis; peptidoglycan biosynthesis. Its function is as follows. Cell wall formation. Catalyzes the addition of glutamate to the nucleotide precursor UDP-N-acetylmuramoyl-L-alanine (UMA). In Streptococcus pneumoniae serotype 19F (strain G54), this protein is UDP-N-acetylmuramoylalanine--D-glutamate ligase.